Consider the following 32-residue polypeptide: Acetolactate synthase, catabolic (32 aa).

It belongs to the TPP enzyme family. As to quaternary structure, homodimer.

It carries out the reaction 2 pyruvate + H(+) = (2S)-2-acetolactate + CO2. The protein operates within polyol metabolism; (R,R)-butane-2,3-diol biosynthesis; (R,R)-butane-2,3-diol from pyruvate: step 1/3. The polypeptide is Acetolactate synthase, catabolic (budB) (Klebsiella aerogenes (Enterobacter aerogenes)).